We begin with the raw amino-acid sequence, 309 residues long: Homoserine kinase (309 aa).

91 to 101 is an ATP binding site; sequence PIGSGLGSSAC.

It belongs to the GHMP kinase family. Homoserine kinase subfamily.

The protein resides in the cytoplasm. The enzyme catalyses L-homoserine + ATP = O-phospho-L-homoserine + ADP + H(+). Its pathway is amino-acid biosynthesis; L-threonine biosynthesis; L-threonine from L-aspartate: step 4/5. Catalyzes the ATP-dependent phosphorylation of L-homoserine to L-homoserine phosphate. This is Homoserine kinase from Buchnera aphidicola subsp. Acyrthosiphon pisum (strain 5A).